The primary structure comprises 267 residues: Probable beta-lactamase YbxI (267 aa).

An N-terminal signal peptide occupies residues 1-23 (MKKWIYVVLVLSIAGIGGFSVHA). S76 (acyl-ester intermediate) is an active-site residue. At K79 the chain carries N6-carboxylysine. 214-216 (KTG) lines the substrate pocket.

The protein belongs to the class-D beta-lactamase family.

It carries out the reaction a beta-lactam + H2O = a substituted beta-amino acid. The protein is Probable beta-lactamase YbxI (ybxI) of Bacillus subtilis (strain 168).